The primary structure comprises 486 residues: CUGBP Elav-like family member 4 (486 aa).

A sufficient for RNA-binding and MSE-dependent splicing activity region spans residues 1–298; it reads MYIKMATLAN…AAFAAAQMQQ (298 aa). Polar residues predominate over residues 18 to 28; sequence LSTNGLGSSPG. 2 disordered regions span residues 18 to 39 and 121 to 149; these read LSTNGLGSSPGSAGHMNGLSHS and LPGMNRPIQVKPADSESRGGSSCLRQPPS. An RRM 1 domain is found at 54–135; sequence IKLFIGQIPR…RPIQVKPADS (82 aa). The segment covering 138-149 has biased composition (polar residues); it reads RGGSSCLRQPPS. The RRM 2 domain maps to 152 to 232; the sequence is RKLFVGMLNK…SSLVVKFADT (81 aa). Residues 239-258 are necessary for TNNT2 exon 5 inclusion; that stretch reads RRMQQMAGQMGMFNPMAIPF. In terms of domain architecture, RRM 3 spans 404-479; sequence PQPPPMIPQQ…KRLKVQLKRP (76 aa).

Belongs to the CELF/BRUNOL family. As to expression, ubiquitous. Strongly expressed in the cerebellum, hippocampus, amygdala, temporal and frontal cortex and frontal lobes.

The protein localises to the nucleus. It localises to the cytoplasm. Functionally, RNA-binding protein implicated in the regulation of pre-mRNA alternative splicing. Mediates exon inclusion and/or exclusion in pre-mRNA that are subject to tissue-specific and developmentally regulated alternative splicing. Specifically activates exon 5 inclusion of cardiac isoforms of TNNT2 during heart remodeling at the juvenile to adult transition. Promotes exclusion of both the smooth muscle (SM) and non-muscle (NM) exons in actinin pre-mRNAs. Activates the splicing of MAPT/Tau exon 10. Binds to muscle-specific splicing enhancer (MSE) intronic sites flanking the alternative exon 5 of TNNT2 pre-mRNA. This is CUGBP Elav-like family member 4 (CELF4) from Homo sapiens (Human).